The primary structure comprises 108 residues: UPF0102 protein Tpet_0671 (108 aa).

Belongs to the UPF0102 family.

The protein is UPF0102 protein Tpet_0671 of Thermotoga petrophila (strain ATCC BAA-488 / DSM 13995 / JCM 10881 / RKU-1).